Here is a 172-residue protein sequence, read N- to C-terminus: General stress protein 18 (172 aa).

The PfpI endopeptidase domain occupies 3–171; that stretch reads KKIAVVLTYY…FNRESLALLE (169 aa). Residue cysteine 104 is the Nucleophile of the active site. Histidine 105 is an active-site residue.

This sequence belongs to the peptidase C56 family.

Its function is as follows. Functions in the protection against aldehyde-stress, possibly by degrading damaged proteins. This is General stress protein 18 (yfkM) from Bacillus subtilis (strain 168).